We begin with the raw amino-acid sequence, 124 residues long: uncharacterized protein (124 aa).

Its subcellular location is the plastid. The protein localises to the chloroplast. This is an uncharacterized protein from Chlamydomonas reinhardtii (Chlamydomonas smithii).